Consider the following 294-residue polypeptide: Foldase protein PrsA 1 (294 aa).

The N-terminal stretch at 1-21 is a signal peptide; the sequence is MTKLKKVMISVIAATLLLLAG. A lipid anchor (N-palmitoyl cysteine) is attached at Cys22. The S-diacylglycerol cysteine moiety is linked to residue Cys22. The 92-residue stretch at 135 to 226 folds into the PpiC domain; it reads EPDITVRHIL…YGYHLIQLVK (92 aa).

It belongs to the PrsA family.

It localises to the cell membrane. It carries out the reaction [protein]-peptidylproline (omega=180) = [protein]-peptidylproline (omega=0). In terms of biological role, plays a major role in protein secretion by helping the post-translocational extracellular folding of several secreted proteins. This is Foldase protein PrsA 1 (prsA1) from Listeria monocytogenes serovar 1/2a (strain ATCC BAA-679 / EGD-e).